Reading from the N-terminus, the 447-residue chain is MAGKGNPVPGPHLNGFPVPTYSYFFPHMLGSLSPPALPGLPISGYSTPSPATIETQSTSSEEIVPSPPSPPPPPRVYKPCFVCQDKSSGYHYGVSACEGCKGFFRRSIQKNMVYTCHREKNCIINKVTRNRCQYCRLQKCLEVGMSKESVRNDRNKKKKDEKKPECIENYVLSPDTEQMINRVRKAHQETFPSLCQLGKYTTTNSSERRVALDVDLWDKFSELSTKCIIKTVEFAKQLPGFVTLTIADQITLLKAACLDILILRICTRYTPEQDTMTFSDGLTLNRTQMHNAGFGPLTDLVFAFANQLLPLEMDDAETGLLSAICLLCGDRQDLEQAEKVDILQEPLLEALKIYVRRRRPHKPHMFPKMLMKITDLRSISAKGAERVITLKMEIPGSMPPLIQEMLENSEGLESGATGSRPSGAPPGSCSPSLSPSSAQSSPPTQSP.

Residues 1–79 are modulating; the sequence is MAGKGNPVPG…PPPPPRVYKP (79 aa). Residues 47 to 61 are compositionally biased toward polar residues; sequence TPSPATIETQSTSSE. Positions 47 to 72 are disordered; the sequence is TPSPATIETQSTSSEEIVPSPPSPPP. NR C4-type zinc fingers lie at residues 80 to 100 and 116 to 140; these read CFVCQDKSSGYHYGVSACEGC and CHREKNCIINKVTRNRCQYCRLQKC. The nuclear receptor DNA-binding region spans 80–145; sequence CFVCQDKSSG…RLQKCLEVGM (66 aa). The hinge stretch occupies residues 146-174; the sequence is SKESVRNDRNKKKKDEKKPECIENYVLSP. An NR LBD domain is found at 175–409; the sequence is DTEQMINRVR…PLIQEMLENS (235 aa). Residues 400–408 carry the 9aaTAD motif; it reads PLIQEMLEN. A disordered region spans residues 407-447; the sequence is ENSEGLESGATGSRPSGAPPGSCSPSLSPSSAQSSPPTQSP. Low complexity predominate over residues 414–447; the sequence is SGATGSRPSGAPPGSCSPSLSPSSAQSSPPTQSP.

Belongs to the nuclear hormone receptor family. NR1 subfamily. Heterodimer; with an rxr molecule. Binds DNA preferentially as a rar/rxr heterodimer.

Its subcellular location is the nucleus. Functionally, receptor for retinoic acid. Retinoic acid receptors bind as heterodimers to their target response elements in response to their ligands, all-trans or 9-cis retinoic acid, and regulate gene expression in various biological processes. The rar/rxr heterodimers bind to the retinoic acid response elements (RARE) composed of tandem 5'-AGGTCA-3' sites known as DR1-DR5. In Takifugu rubripes (Japanese pufferfish), this protein is Retinoic acid receptor alpha (rara).